The sequence spans 270 residues: MAAPGEALTSSGYIAHHLSNLSLYKLGLVGSETSFWNVHIDSLFFSWFTGLIFLGIFYKVAKRTTAGVPGKLQCAVEMIVEFVADNVKDTFHGRNPLIAPLALTIFCWVFLMNVMDLVPIDFLPYPAEHWLGIPYLKVVPSADVNITMAMALGVFALMIYYSIKVKGLGGFAKELALHPFNHPLMIPFNLLIEVVSLLAKPLSLGMRLFGNMFAGEVVFILCAAMLPWYLQWMGSLPWAIFHILVITIQAFVFMMLTIVYLSMAHEDPDH.

5 helical membrane-spanning segments follow: residues 38–58 (VHID…GIFY), 98–118 (IAPL…MDLV), 143–163 (DVNI…YYSI), 208–228 (LFGN…MLPW), and 239–259 (AIFH…LTIV).

It belongs to the ATPase A chain family. F-type ATPases have 2 components, CF(1) - the catalytic core - and CF(0) - the membrane proton channel. CF(1) has five subunits: alpha(3), beta(3), gamma(1), delta(1), epsilon(1). CF(0) has three main subunits: a(1), b(2) and c(9-12). The alpha and beta chains form an alternating ring which encloses part of the gamma chain. CF(1) is attached to CF(0) by a central stalk formed by the gamma and epsilon chains, while a peripheral stalk is formed by the delta and b chains.

The protein resides in the cell inner membrane. Its function is as follows. Key component of the proton channel; it plays a direct role in the translocation of protons across the membrane. This chain is ATP synthase subunit a, found in Vibrio alginolyticus.